A 143-amino-acid chain; its full sequence is Deoxyuridine 5'-triphosphate nucleotidohydrolase (143 aa).

The protein belongs to the dUTPase family. Requires Mg(2+) as cofactor.

The catalysed reaction is dUTP + H2O = dUMP + diphosphate + H(+). This enzyme is involved in nucleotide metabolism: it produces dUMP, the immediate precursor of thymidine nucleotides and it decreases the intracellular concentration of dUTP so that uracil cannot be incorporated into DNA. The protein is Deoxyuridine 5'-triphosphate nucleotidohydrolase (DUT) of Yaba monkey tumor virus (strain VR587) (YMTV).